A 127-amino-acid polypeptide reads, in one-letter code: Fatty acid binding protein 1-A, liver (127 aa).

The protein belongs to the calycin superfamily. Fatty-acid binding protein (FABP) family. As to expression, in adults, weakly expressed in the intestine.

It is found in the cytoplasm. Functionally, binds free fatty acids and their coenzyme A derivatives, bilirubin, and some other small molecules in the cytoplasm. May be involved in intracellular lipid transport. The polypeptide is Fatty acid binding protein 1-A, liver (Danio rerio (Zebrafish)).